We begin with the raw amino-acid sequence, 284 residues long: L-ribulose-5-phosphate 3-epimerase UlaE (284 aa).

The protein belongs to the L-ribulose-5-phosphate 3-epimerase family.

The catalysed reaction is L-ribulose 5-phosphate = L-xylulose 5-phosphate. It functions in the pathway cofactor degradation; L-ascorbate degradation; D-xylulose 5-phosphate from L-ascorbate: step 3/4. Catalyzes the isomerization of L-xylulose-5-phosphate to L-ribulose-5-phosphate. Is involved in the anaerobic L-ascorbate utilization. This is L-ribulose-5-phosphate 3-epimerase UlaE from Escherichia coli (strain 55989 / EAEC).